The following is a 100-amino-acid chain: Apolipoprotein C-II (100 aa).

Residues 1–22 (MGTRFLLALFLVLLVLGFEVQG) form the signal peptide. A lipid binding region spans residues 66–74 (TVDEKLRDM). The tract at residues 78–100 (STAAVSTYAGIFTDQLLTLLKGD) is lipoprotein lipase cofactor.

Belongs to the apolipoprotein C2 family. Proapolipoprotein C-II is synthesized as a sialic acid containing glycoprotein which is subsequently desialylated prior to its proteolytic processing. In terms of processing, proapolipoprotein C-II, the major form found in plasma undergoes proteolytic cleavage of its N-terminal hexapeptide to generate apolipoprotein C-II, which occurs as the minor form in plasma.

It localises to the secreted. In terms of biological role, component of chylomicrons, very low-density lipoproteins (VLDL), low-density lipoproteins (LDL), and high-density lipoproteins (HDL) in plasma. Plays an important role in lipoprotein metabolism as an activator of lipoprotein lipase. Both proapolipoprotein C-II and apolipoprotein C-II can activate lipoprotein lipase. The protein is Apolipoprotein C-II (APOC2) of Otolemur garnettii (Small-eared galago).